The sequence spans 529 residues: Isoleucine--tRNA ligase (529 aa).

Residue glutamate 482 participates in L-isoleucyl-5'-AMP binding. Residues 523 to 527 (KMSKS) carry the 'KMSKS' region motif. Lysine 526 lines the ATP pocket.

Belongs to the class-I aminoacyl-tRNA synthetase family. IleS type 1 subfamily. As to quaternary structure, monomer.

The protein localises to the cytoplasm. It carries out the reaction tRNA(Ile) + L-isoleucine + ATP = L-isoleucyl-tRNA(Ile) + AMP + diphosphate. Functionally, catalyzes the attachment of isoleucine to tRNA(Ile). As IleRS can inadvertently accommodate and process structurally similar amino acids such as valine, to avoid such errors it has two additional distinct tRNA(Ile)-dependent editing activities. One activity is designated as 'pretransfer' editing and involves the hydrolysis of activated Val-AMP. The other activity is designated 'posttransfer' editing and involves deacylation of mischarged Val-tRNA(Ile). This is Isoleucine--tRNA ligase (ileS) from Aquifex pyrophilus.